The sequence spans 520 residues: Tetratricopeptide repeat protein 6 (520 aa).

13 TPR repeats span residues 57 to 90 (MTMC…ISHS), 101 to 138 (ADCL…DKNS), 139 to 172 (YTAF…DATE), 176 to 209 (LNTF…SRTN), 210 to 243 (GSLC…NPCF), 245 to 280 (DAYV…NPAY), 281 to 314 (IKAR…DPKN), 320 to 347 (GRAV…ISTT), 348 to 381 (AEFL…NPKY), 382 to 415 (SLAY…DPEN), 416 to 449 (EYVL…CPFW), 450 to 483 (AAVY…KPND), and 484 to 517 (ALVY…EDYA).

The chain is Tetratricopeptide repeat protein 6 from Homo sapiens (Human).